Consider the following 2748-residue polypeptide: Nuclear migration protein NUM1 (2748 aa).

Residues 1-10 are compositionally biased toward basic residues; that stretch reads MSHNNRHKKN. Disordered regions lie at residues 1–36 and 290–312; these read MSHNNRHKKNNDKDSSAGQYANSIDNSLSQESVSTN and YYQKQHTSDTTVTSDPDSEGTTS. Over residues 17-36 the composition is skewed to polar residues; that stretch reads AGQYANSIDNSLSQESVSTN. Positions 293 to 304 are enriched in low complexity; sequence KQHTSDTTVTSD. 12 tandem repeats follow at residues 593-656, 657-727, 728-798, 799-862, 863-926, 927-990, 991-1054, 1055-1118, 1119-1182, 1183-1246, 1247-1310, and 1311-1374. Positions 593-1384 are 13 X tandem repeats; sequence PSLEYLVEHA…PSLEYLVKHA (792 aa). Residues S611, S675, and S746 each carry the phosphoserine modification. Phosphoserine is present on residues S881, S945, and S1009. Phosphoserine is present on residues S1201, S1265, and S1329. The stretch at 1375–1384 is one 13; truncated repeat; it reads PSLEYLVKHA. Residues 2111–2133 form a disordered region; sequence ERAERIDEQSINTTSSNSTTTSS. Positions 2122–2133 are enriched in low complexity; that stretch reads NTTSSNSTTTSS. Phosphoserine is present on residues S2162, S2164, S2197, S2217, S2220, S2221, S2360, and S2424. A compositionally biased stretch (basic and acidic residues) spans 2444-2460; sequence KEDKKGQATASKHEYVS. Positions 2444–2536 are disordered; the sequence is KEDKKGQATA…HSSRNTPASR (93 aa). The span at 2465 to 2474 shows a compositional bias: polar residues; the sequence is NKTSTVSTKS. The segment covering 2492–2503 has biased composition (basic and acidic residues); the sequence is SESHPQIEEQSH. S2494 carries the post-translational modification Phosphoserine. Residues 2504–2514 are compositionally biased toward basic residues; sequence RTNHHKHHKRQ. A compositionally biased stretch (low complexity) spans 2516–2532; the sequence is SLNSNSTSKTTHSSRNT. S2545 bears the Phosphoserine mark. Positions 2573-2683 constitute a PH domain; the sequence is QTVIGEYLFK…WYNSLRYLLQ (111 aa). Residues 2707–2748 form a disordered region; the sequence is IFPLPGENTKSSSKRLSASRRSVSTRSLRHRVPQSRSFGNLR. The segment covering 2720-2730 has biased composition (low complexity); that stretch reads KRLSASRRSVS.

Interacts with PAC11 when DYN1 is present, and TUB3.

It is found in the bud tip. Controls nuclear migration. NUM1 specifically controls the interaction of the bud neck cytoskeleton with the pre-divisional G2 nucleus. Functions in dynein-anchoring. During late anaphase forms dynein-interacting cortical microtubule capture sites at both cellular poles. This leads to dynein-dependent sliding of the microtubules in the bud. In Saccharomyces cerevisiae (strain ATCC 204508 / S288c) (Baker's yeast), this protein is Nuclear migration protein NUM1 (NUM1).